The chain runs to 290 residues: Protease HtpX (290 aa).

A run of 2 helical transmembrane segments spans residues I4–L24 and G36–I56. H142 lines the Zn(2+) pocket. The active site involves E143. Residue H146 coordinates Zn(2+). 2 helical membrane-spanning segments follow: residues G150–A170 and F193–W213. Residue E219 participates in Zn(2+) binding.

This sequence belongs to the peptidase M48B family. Zn(2+) is required as a cofactor.

It is found in the cell inner membrane. The polypeptide is Protease HtpX (Stutzerimonas stutzeri (strain A1501) (Pseudomonas stutzeri)).